We begin with the raw amino-acid sequence, 268 residues long: Forkhead box protein R1 (268 aa).

Positions 91-126 (EDSCSEASEVQQPLPPCRQKRKQRRSTVPLPLAPGR) are disordered. The fork-head DNA-binding region spans 149-248 (RPPLHYFHLI…KEARTLASTQ (100 aa)).

In terms of tissue distribution, expressed in adult germ cells (at protein level). Expressed in heart, liver, lung and embryonic brain.

The protein localises to the nucleus. The protein resides in the cytoplasm. Its subcellular location is the perinuclear region. In terms of biological role, transcription factor which acts as both an activator and a repressor. Activates transcription of a number of genes including the heat shock chaperones HSPA1A and HSPA6 and the antioxidant NADPH-dependent reductase DHRS2 which are involved in protection against oxidative stress. Required for normal brain development. The chain is Forkhead box protein R1 (Foxr1) from Mus musculus (Mouse).